The following is a 349-amino-acid chain: Hydroxymethylglutaryl-CoA synthase (349 aa).

The (3S)-3-hydroxy-3-methylglutaryl-CoA site is built by aspartate 30 and alanine 31. The active-site Proton donor/acceptor is glutamate 82. Cysteine 114 and threonine 155 together coordinate (3S)-3-hydroxy-3-methylglutaryl-CoA. Residue cysteine 114 is the Acyl-thioester intermediate of the active site. Arginine 203 contributes to the CoA binding site. (3S)-3-hydroxy-3-methylglutaryl-CoA is bound by residues threonine 205 and histidine 238. Histidine 238 (proton donor/acceptor) is an active-site residue. Lysine 243 is a CoA binding site. Residues asparagine 270 and serine 300 each contribute to the (3S)-3-hydroxy-3-methylglutaryl-CoA site.

The protein belongs to the thiolase-like superfamily. Archaeal HMG-CoA synthase family. Interacts with acetoacetyl-CoA thiolase that catalyzes the precedent step in the pathway and with a DUF35 protein. The acetoacetyl-CoA thiolase/HMG-CoA synthase complex channels the intermediate via a fused CoA-binding site, which allows for efficient coupling of the endergonic thiolase reaction with the exergonic HMGCS reaction.

It catalyses the reaction acetoacetyl-CoA + acetyl-CoA + H2O = (3S)-3-hydroxy-3-methylglutaryl-CoA + CoA + H(+). It functions in the pathway metabolic intermediate biosynthesis; (R)-mevalonate biosynthesis; (R)-mevalonate from acetyl-CoA: step 2/3. Catalyzes the condensation of acetyl-CoA with acetoacetyl-CoA to form 3-hydroxy-3-methylglutaryl-CoA (HMG-CoA). Functions in the mevalonate (MVA) pathway leading to isopentenyl diphosphate (IPP), a key precursor for the biosynthesis of isoprenoid compounds that are building blocks of archaeal membrane lipids. The sequence is that of Hydroxymethylglutaryl-CoA synthase from Methanococcus maripaludis (strain DSM 14266 / JCM 13030 / NBRC 101832 / S2 / LL).